Consider the following 350-residue polypeptide: Cytosolic sulfotransferase 18 (350 aa).

M1 is subject to N-acetylmethionine. The span at 1 to 17 (MESETLTAKATITTTTL) shows a compositional bias: low complexity. Positions 1 to 28 (MESETLTAKATITTTTLPSHDETKTEST) are disordered. Positions 19–28 (SHDETKTEST) are enriched in basic and acidic residues. Position 93–98 (93–98 (KTGTTW)) interacts with 3'-phosphoadenylyl sulfate. Catalysis depends on H155, which acts as the Proton acceptor. Residues R177, S185, Y243, and 313–315 (RKG) each bind 3'-phosphoadenylyl sulfate.

Belongs to the sulfotransferase 1 family. As to expression, expressed in roots, leaves and stems. Barely detected in siliques and flowers.

It localises to the cytoplasm. The catalysed reaction is an aliphatic (Z)-desulfo-glucosinolate + 3'-phosphoadenylyl sulfate = a (Z)-omega-(methylsulfanyl)-N-sulfo-alkylhydroximate S-glucoside + adenosine 3',5'-bisphosphate + H(+). With respect to regulation, inhibited by phosphoadenosine 5'-phosphate (PAP). Its function is as follows. Sulfotransferase that utilizes 3'-phospho-5'-adenylyl sulfate (PAPS) as sulfonate donor to catalyze the sulfate conjugation of desulfo-glucosinolates (dsGSs), the final step in the biosynthesis of the glucosinolate core structure. Preferred substrate are the long-chain desulfo-glucosinolates, 7-methylthioheptyl and 8-methylthiooctyl, derived from methionine. Substrate preference is desulfo-benzyl glucosinolate &gt; desulfo-4-methylthiobutyl glucosinolate &gt; desulfo-6-methylthiohexyl glucosinolate &gt; desulfo-3-methylthiopropyl glucosinolate &gt; desulfo-indol-3-yl methyl glucosinolate &gt; desulfo-singrin &gt; desulfo-3-butenyl glucosinolate. The polypeptide is Cytosolic sulfotransferase 18 (SOT18) (Arabidopsis thaliana (Mouse-ear cress)).